We begin with the raw amino-acid sequence, 463 residues long: Glycine--tRNA ligase (463 aa).

Substrate contacts are provided by Arg-98 and Glu-174. ATP contacts are provided by residues 206-208 (RNE), 216-221 (FRTREF), 290-291 (EL), and 334-337 (GADR). 221–225 (FEQME) serves as a coordination point for substrate. 330 to 334 (EPSLG) contacts substrate.

It belongs to the class-II aminoacyl-tRNA synthetase family. Homodimer.

The protein resides in the cytoplasm. The enzyme catalyses tRNA(Gly) + glycine + ATP = glycyl-tRNA(Gly) + AMP + diphosphate. Catalyzes the attachment of glycine to tRNA(Gly). The polypeptide is Glycine--tRNA ligase (Staphylococcus haemolyticus (strain JCSC1435)).